A 133-amino-acid chain; its full sequence is Small ribosomal subunit protein uS8c (133 aa).

Belongs to the universal ribosomal protein uS8 family. As to quaternary structure, part of the 30S ribosomal subunit.

The protein resides in the plastid. Its subcellular location is the chloroplast. In terms of biological role, one of the primary rRNA binding proteins, it binds directly to 16S rRNA central domain where it helps coordinate assembly of the platform of the 30S subunit. The protein is Small ribosomal subunit protein uS8c (rps8) of Pyropia yezoensis (Susabi-nori).